A 370-amino-acid polypeptide reads, in one-letter code: Alanine racemase (370 aa).

Lysine 36 functions as the Proton acceptor; specific for D-alanine in the catalytic mechanism. Lysine 36 carries the N6-(pyridoxal phosphate)lysine modification. Arginine 134 lines the substrate pocket. Tyrosine 265 (proton acceptor; specific for L-alanine) is an active-site residue. Methionine 313 is a substrate binding site.

Belongs to the alanine racemase family. It depends on pyridoxal 5'-phosphate as a cofactor.

It carries out the reaction L-alanine = D-alanine. Its pathway is amino-acid biosynthesis; D-alanine biosynthesis; D-alanine from L-alanine: step 1/1. In terms of biological role, catalyzes the interconversion of L-alanine and D-alanine. May also act on other amino acids. The polypeptide is Alanine racemase (alr) (Desulforamulus reducens (strain ATCC BAA-1160 / DSM 100696 / MI-1) (Desulfotomaculum reducens)).